The chain runs to 536 residues: MSGASSGTATGARLFGISSVLGEYRVLIGDEGAGPSRSPSEVSFSVWYRSRAARLVILCLVASFLVPCLTFLIAETVMGQTVTTPPSLTLDHWSEVRTRAHNQGIEVRKKKWITLCEAEWVMMNVGWPREGTPPLDNTSQVEKRIFAPGPHGHPDQVPYITTWRSLATDPPSWVRPFLPPPKPPTPLPQPLSPQPSAPPTSSLYPVLPKTNPPKPPVLPPDPSSPLIDLLTEEPPPYPGGHGPPPSGLRTPAASPIASRLRERRENPAEESQALPLREGPNNRPQYWPFSASDLYNWKLHNPPFSQDPVALTNLIESILVTHQPTWDDCQQLLQALLTAEERQRVLLEARKQVPGEDGRPTQLPNVIDEAFPLTRPNWDFATPAGREHLRLYRQLLLAGLRGAARRPTNLAQVKQVVQGKEETPASFLERLKEAYRMYTPYDPEDPGQAASVILSFIYQSSPDIRNKLQRLEGLQGFTLSDLLKEAEKIYNKRETPEEREERLWQRQEERDKKRHKEMTKVLATVVTQNRNKDREE.

The Cytoplasmic segment spans residues 1–54 (MSGASSGTATGARLFGISSVLGEYRVLIGDEGAGPSRSPSEVSFSVWYRSRAAR). A helical membrane pass occupies residues 55-75 (LVILCLVASFLVPCLTFLIAE). The Extracellular segment spans residues 76–536 (TVMGQTVTTP…TQNRNKDREE (461 aa)). N137 is a glycosylation site (N-linked (GlcNAc...) asparagine; by host). Disordered stretches follow at residues 174-284 (VRPF…NNRP) and 494-536 (ETPE…DREE). Over residues 177 to 198 (FLPPPKPPTPLPQPLSPQPSAP) the composition is skewed to pro residues. The segment covering 199 to 209 (PTSSLYPVLPK) has biased composition (low complexity). Pro residues-rich tracts occupy residues 210 to 223 (TNPP…PDPS) and 233 to 246 (EPPP…PPPS). The span at 494-511 (ETPEEREERLWQRQEERD) shows a compositional bias: basic and acidic residues.

Glycosylated by host. In terms of processing, cleaved by host near the middle of the molecule, releasing the c-terminal half containing capsid and nucleoprotein domains op GAG.

It localises to the host cell membrane. Plays a role in viral particle release. Presumably acts by facilitating the fission of the virion bud at the cell surface. This is Glyco-Gag protein from Feline sarcoma virus (strain McDonough).